The sequence spans 184 residues: Translation initiation factor IF-3 (184 aa).

It belongs to the IF-3 family. Monomer.

The protein resides in the cytoplasm. Functionally, IF-3 binds to the 30S ribosomal subunit and shifts the equilibrium between 70S ribosomes and their 50S and 30S subunits in favor of the free subunits, thus enhancing the availability of 30S subunits on which protein synthesis initiation begins. This chain is Translation initiation factor IF-3, found in Mycoplasma genitalium (strain ATCC 33530 / DSM 19775 / NCTC 10195 / G37) (Mycoplasmoides genitalium).